The sequence spans 353 residues: MLDFSLFVWYHRLCNYTKYLFRIIRFWTIKRKELSFMEALKYPPILEEFLNYFSTVKARSPNTIKAYAYDLILFFRFLKKRRGKVSDDIPFDEIDISDVDIDLIESVDLNDLYAYLSFVTNERSNTPPARARKVASLRSFYNYLYRKAKVISKNPTQELESPKLSVRHPIYLTLEESKKLLNSIDGPFKERDYAIITLFLNCGLRVSELVNINLDDIKEDKLTVIGKGNKQRTIYLNEACIKAISDYLKVRPKEGVKDKKALFLSKRLKRISVKTVQYLVKKHLKHANLEGKKYSAHKLRHTAATLMYRYGNVDIRTLQKLLGHSNVSTTQIYTHVDDSQLREAVNKNPLSQE.

Residues 40-145 form the Core-binding (CB) domain; sequence LKYPPILEEF…SLRSFYNYLY (106 aa). One can recognise a Tyr recombinase domain in the interval 167–346; it reads RHPIYLTLEE…DDSQLREAVN (180 aa). Active-site residues include Arg205, Lys227, His297, Arg300, and His324. Tyr333 (O-(3'-phospho-DNA)-tyrosine intermediate) is an active-site residue.

This sequence belongs to the 'phage' integrase family.

It is found in the cytoplasm. Site-specific tyrosine recombinase, which acts by catalyzing the cutting and rejoining of the recombining DNA molecules. The sequence is that of Tyrosine recombinase XerC (xerC) from Caldanaerobacter subterraneus subsp. tengcongensis (strain DSM 15242 / JCM 11007 / NBRC 100824 / MB4) (Thermoanaerobacter tengcongensis).